The chain runs to 393 residues: Adaptive-response sensory kinase SasA (393 aa).

The region spanning 171–393 is the Histidine kinase domain; the sequence is MLAHDLRSPL…CFHFTLPVFR (223 aa). His174 carries the post-translational modification Phosphohistidine; by autocatalysis.

In terms of assembly, homooligomerizes. Interacts with KaiC. Participates in the KaiABC clock complex, whose core is composed of a KaiC homohexamer, 6 KaiB and up to 6 KaiA dimers. SasA and KaiB(fs) compete to bind to KaiC.

The enzyme catalyses ATP + protein L-histidine = ADP + protein N-phospho-L-histidine.. Functionally, member of the two-component regulatory system SasA/RpaA involved in genome-wide circadian gene expression. One of several clock output pathways. Participates in the Kai clock protein complex, the main circadian regulator in cyanobacteria, via its interaction with KaiC. KaiC enhances the autophosphorylation activity of SasA, which then transfers its phosphate group to RpaA to activate it. In addition to its output function, recruits fold-shifted KaiB (KaiB(fs)) to KaiC to cooperatively form the KaiB(6):KaiC(6) complex (independent of SasA kinase activity). Required for robustness of the circadian rhythm of gene expression and is involved in clock output, also required for adaptation to light/dark cycles. The chain is Adaptive-response sensory kinase SasA from Gloeothece citriformis (strain PCC 7424) (Cyanothece sp. (strain PCC 7424)).